The primary structure comprises 382 residues: Prophage ps2 probable integrase (382 aa).

One can recognise a Core-binding (CB) domain in the interval 63-142 (AKFTDIAEEW…TLNLIFDYAV (80 aa)). In terms of domain architecture, Tyr recombinase spans 170-376 (IQNKYLEQNE…TENMKSSIID (207 aa)). Residues R209, K242, H326, R329, and H352 contribute to the active site. Y363 (O-(3'-phospho-DNA)-tyrosine intermediate) is an active-site residue.

This sequence belongs to the 'phage' integrase family.

The protein is Prophage ps2 probable integrase (ps201) of Lactococcus lactis subsp. lactis (strain IL1403) (Streptococcus lactis).